Reading from the N-terminus, the 527-residue chain is UDP-glucuronosyltransferase 2A3 (527 aa).

Residues methionine 1–cysteine 23 form the signal peptide. Over glycine 24–valine 491 the chain is Extracellular. Asparagine 313 is a glycosylation site (N-linked (GlcNAc...) asparagine). The chain crosses the membrane as a helical span at residues isoleucine 492–phenylalanine 512. Residues serine 513 to glutamate 527 are Cytoplasmic-facing.

This sequence belongs to the UDP-glycosyltransferase family.

The protein resides in the membrane. It carries out the reaction glucuronate acceptor + UDP-alpha-D-glucuronate = acceptor beta-D-glucuronoside + UDP + H(+). Its function is as follows. UDP-glucuronosyltransferases catalyze phase II biotransformation reactions in which lipophilic substrates are conjugated with glucuronic acid to increase water solubility and enhance excretion. They are of major importance in the conjugation and subsequent elimination of potentially toxic xenobiotics and endogenous compounds. The sequence is that of UDP-glucuronosyltransferase 2A3 (UGT2A3) from Homo sapiens (Human).